The chain runs to 164 residues: Shikimate kinase (164 aa).

10–15 contributes to the ATP binding site; it reads GVGKTT. Residue T14 coordinates Mg(2+). Residues D28, R52, and G75 each contribute to the substrate site. An ATP-binding site is contributed by R116. A substrate-binding site is contributed by R134. An ATP-binding site is contributed by R151.

This sequence belongs to the shikimate kinase family. As to quaternary structure, monomer. Mg(2+) serves as cofactor.

It is found in the cytoplasm. It catalyses the reaction shikimate + ATP = 3-phosphoshikimate + ADP + H(+). It participates in metabolic intermediate biosynthesis; chorismate biosynthesis; chorismate from D-erythrose 4-phosphate and phosphoenolpyruvate: step 5/7. In terms of biological role, catalyzes the specific phosphorylation of the 3-hydroxyl group of shikimic acid using ATP as a cosubstrate. The chain is Shikimate kinase from Streptococcus equi subsp. zooepidemicus (strain MGCS10565).